We begin with the raw amino-acid sequence, 468 residues long: Adenosylhomocysteinase (468 aa).

Threonine 57, aspartate 132, and glutamate 194 together coordinate substrate. 195 to 197 (TTT) is a binding site for NAD(+). Residues lysine 224 and aspartate 228 each contribute to the substrate site. Residues asparagine 229, 258 to 263 (GFGDVG), glutamate 281, asparagine 316, 337 to 339 (IGH), and asparagine 382 contribute to the NAD(+) site.

Belongs to the adenosylhomocysteinase family. NAD(+) is required as a cofactor.

The protein localises to the cytoplasm. The enzyme catalyses S-adenosyl-L-homocysteine + H2O = L-homocysteine + adenosine. It functions in the pathway amino-acid biosynthesis; L-homocysteine biosynthesis; L-homocysteine from S-adenosyl-L-homocysteine: step 1/1. May play a key role in the regulation of the intracellular concentration of adenosylhomocysteine. The protein is Adenosylhomocysteinase of Methylorubrum populi (strain ATCC BAA-705 / NCIMB 13946 / BJ001) (Methylobacterium populi).